Reading from the N-terminus, the 377-residue chain is Nitric oxide reductase FlRd-NAD(+) reductase (377 aa).

Belongs to the FAD-dependent oxidoreductase family. Requires FAD as cofactor.

The protein resides in the cytoplasm. The enzyme catalyses 2 reduced [nitric oxide reductase rubredoxin domain] + NAD(+) + H(+) = 2 oxidized [nitric oxide reductase rubredoxin domain] + NADH. The protein operates within nitrogen metabolism; nitric oxide reduction. Its function is as follows. One of at least two accessory proteins for anaerobic nitric oxide (NO) reductase. Reduces the rubredoxin moiety of NO reductase. This Escherichia coli (strain SE11) protein is Nitric oxide reductase FlRd-NAD(+) reductase.